Here is a 518-residue protein sequence, read N- to C-terminus: Cytochrome P450 monooxygenase ARMGADRAFT_1018417 (518 aa).

Residues 3 to 23 (LFSAYALAFSLLMIPLILYIL) traverse the membrane as a helical segment. Residue Cys433 coordinates heme. A glycan (N-linked (GlcNAc...) asparagine) is linked at Asn455.

It belongs to the cytochrome P450 family. It depends on heme as a cofactor.

The protein resides in the membrane. Its pathway is secondary metabolite biosynthesis. Functionally, cytochrome P450 monooxygenase, part of the gene cluster that mediates the biosynthesis of melleolides, a range of antifungal and phytotoxic polyketide derivatives composed of an orsellinic acid (OA) moiety esterified to various sesquiterpene alcohols. The first step in melleolides biosynthesis is performed by the delta(6)-protoilludene synthase PRO1 which catalyzes the cyclization of farnesyl diphosphate to protoilludene. The orsellinic acid synthase armB produces OA by condensing acetyl-CoA with 3 malonyl-CoA units in a three-round chain elongation reaction folowed by a C2-C7 ring closure. ArmB further catalyzes the trans-esterification of OA to the various sesquiterpene alcohols resulting from the hydroxylation of protoilludene. The melleolides cluster also includes 5 cytochrome P450 monooxygenases, 4 NAD(+)-dependent oxidoreductases, one flavin-dependent oxidoreductase, and one O-methyltransferase. The cytochrome P450 monooxygenases may be involved in protoilludene hydroxylation to elaborate melleolides with multiple alcohol groups, such as melleolide D, which carries alcohol functionalities at C-4, C-5, C-10, and C-13. The role of the NAD(+)-dependent enzymes remains unknown. Numerous melleolides, including arnamial, show 5'-O-methylation of the aromatic moiety which may be catalyzed by the methyltransferase encoded in the cluster. The flavin-dependent oxidoreductase might represent the dehydrogenase yielding the aldehyde in position 1 of arnamial and other melleolides. Finally, several halogenase localized outside of the cluster, are able to catalyze the transfer of a single chlorine atom to the melleolide backbone, resulting in a 6'-chloromelleolide product. The protein is Cytochrome P450 monooxygenase ARMGADRAFT_1018417 of Armillaria gallica (Bulbous honey fungus).